We begin with the raw amino-acid sequence, 91 residues long: Large ribosomal subunit protein bL28 (91 aa).

It belongs to the bacterial ribosomal protein bL28 family.

The sequence is that of Large ribosomal subunit protein bL28 from Protochlamydia amoebophila (strain UWE25).